We begin with the raw amino-acid sequence, 943 residues long: Translation initiation factor IF-2 (943 aa).

The interval Ile-46–Pro-359 is disordered. Over residues Lys-57–Ala-76 the composition is skewed to low complexity. Basic and acidic residues-rich tracts occupy residues Ser-92–Gln-103 and Ala-110–Asp-124. A compositionally biased stretch (polar residues) spans Ser-130–Gln-141. Positions Thr-142–Arg-190 are enriched in low complexity. Basic and acidic residues-rich tracts occupy residues Ser-191–Asn-205, Ala-239–Ala-250, and Lys-259–Thr-271. Composition is skewed to low complexity over residues Pro-289–Ala-299 and Asn-315–Arg-330. Over residues Asn-331–Gln-342 the composition is skewed to basic residues. The span at Pro-346–Leu-358 shows a compositional bias: basic and acidic residues. The 170-residue stretch at Pro-444–Lys-613 folds into the tr-type G domain. Positions Gly-453–Thr-460 are G1. Residue Gly-453–Thr-460 participates in GTP binding. The G2 stretch occupies residues Gly-478 to His-482. A G3 region spans residues Asp-499 to Gly-502. GTP contacts are provided by residues Asp-499–His-503 and Asn-553–Asp-556. Positions Asn-553–Asp-556 are G4. The interval Ser-589–Lys-591 is G5.

The protein belongs to the TRAFAC class translation factor GTPase superfamily. Classic translation factor GTPase family. IF-2 subfamily.

Its subcellular location is the cytoplasm. Functionally, one of the essential components for the initiation of protein synthesis. Protects formylmethionyl-tRNA from spontaneous hydrolysis and promotes its binding to the 30S ribosomal subunits. Also involved in the hydrolysis of GTP during the formation of the 70S ribosomal complex. This chain is Translation initiation factor IF-2, found in Lacticaseibacillus casei (strain BL23) (Lactobacillus casei).